Reading from the N-terminus, the 208-residue chain is Holliday junction resolvase RecU (208 aa).

Residues threonine 86, aspartate 88, glutamate 101, and glutamine 120 each coordinate Mg(2+).

The protein belongs to the RecU family. Mg(2+) serves as cofactor.

The protein resides in the cytoplasm. The catalysed reaction is Endonucleolytic cleavage at a junction such as a reciprocal single-stranded crossover between two homologous DNA duplexes (Holliday junction).. Endonuclease that resolves Holliday junction intermediates in genetic recombination. Cleaves mobile four-strand junctions by introducing symmetrical nicks in paired strands. Promotes annealing of linear ssDNA with homologous dsDNA. Required for DNA repair, homologous recombination and chromosome segregation. The chain is Holliday junction resolvase RecU from Lacticaseibacillus casei (strain BL23) (Lactobacillus casei).